Here is a 454-residue protein sequence, read N- to C-terminus: Protein disulfide-isomerase TMX3 (454 aa).

The signal sequence occupies residues methionine 1–cysteine 24. One can recognise a Thioredoxin domain in the interval lysine 25–arginine 128. At lysine 25–proline 375 the chain is on the lumenal side. Residues cysteine 53 and cysteine 56 each act as nucleophile in the active site. Residues cysteine 53 and cysteine 56 are joined by a disulfide bond. Asparagine 258 and asparagine 313 each carry an N-linked (GlcNAc...) asparagine glycan. A helical transmembrane segment spans residues leucine 376–isoleucine 396. Residues tyrosine 397–aspartate 454 lie on the Cytoplasmic side of the membrane. The interval valine 412 to aspartate 454 is disordered. Over residues glutamate 444–aspartate 454 the composition is skewed to basic and acidic residues. The Di-lysine motif motif lies at lysine 451–aspartate 454.

The protein belongs to the protein disulfide isomerase family.

The protein localises to the endoplasmic reticulum membrane. The enzyme catalyses Catalyzes the rearrangement of -S-S- bonds in proteins.. In terms of biological role, probable disulfide isomerase, which participates in the folding of proteins containing disulfide bonds. May act as a dithiol oxidase. Acts as a regulator of endoplasmic reticulum-mitochondria contact sites via its ability to regulate redox signals. The chain is Protein disulfide-isomerase TMX3 (TMX3) from Pongo abelii (Sumatran orangutan).